We begin with the raw amino-acid sequence, 120 residues long: Large ribosomal subunit protein uL29A (120 aa).

A phosphoserine mark is found at Ser13 and Ser50.

It belongs to the universal ribosomal protein uL29 family. As to quaternary structure, component of the large ribosomal subunit (LSU). Mature yeast ribosomes consist of a small (40S) and a large (60S) subunit. The 40S small subunit contains 1 molecule of ribosomal RNA (18S rRNA) and 33 different proteins (encoded by 57 genes). The large 60S subunit contains 3 rRNA molecules (25S, 5.8S and 5S rRNA) and 46 different proteins (encoded by 81 genes). uL29 is associated with the polypeptide exit tunnel.

It is found in the cytoplasm. Functionally, component of the ribosome, a large ribonucleoprotein complex responsible for the synthesis of proteins in the cell. The small ribosomal subunit (SSU) binds messenger RNAs (mRNAs) and translates the encoded message by selecting cognate aminoacyl-transfer RNA (tRNA) molecules. The large subunit (LSU) contains the ribosomal catalytic site termed the peptidyl transferase center (PTC), which catalyzes the formation of peptide bonds, thereby polymerizing the amino acids delivered by tRNAs into a polypeptide chain. The nascent polypeptides leave the ribosome through a tunnel in the LSU and interact with protein factors that function in enzymatic processing, targeting, and the membrane insertion of nascent chains at the exit of the ribosomal tunnel. The chain is Large ribosomal subunit protein uL29A from Saccharomyces cerevisiae (strain ATCC 204508 / S288c) (Baker's yeast).